Reading from the N-terminus, the 334-residue chain is Proline-serine-threonine phosphatase-interacting protein 2 (334 aa).

The F-BAR domain maps to S4–D264. Residues G66–N166 are a coiled coil. The disordered stretch occupies residues V295–N322. 2 positions are modified to phosphotyrosine: Y323 and Y329.

Post-translationally, phosphorylated on tyrosine.

It localises to the cytoplasm. It is found in the membrane. In terms of biological role, binds to F-actin. May be involved in regulation of the actin cytoskeleton. The chain is Proline-serine-threonine phosphatase-interacting protein 2 (PSTPIP2) from Homo sapiens (Human).